Reading from the N-terminus, the 371-residue chain is Probable L-aspartate decarboxylase (371 aa).

At Lys-232 the chain carries N6-(pyridoxal phosphate)lysine.

The protein belongs to the group II decarboxylase family. MfnA subfamily. Pyridoxal 5'-phosphate serves as cofactor.

The catalysed reaction is L-aspartate + H(+) = beta-alanine + CO2. The protein operates within cofactor biosynthesis; coenzyme A biosynthesis. Functionally, catalyzes the decarboxylation of L-aspartate to produce beta-alanine. The polypeptide is Probable L-aspartate decarboxylase (Pyrococcus furiosus (strain ATCC 43587 / DSM 3638 / JCM 8422 / Vc1)).